The chain runs to 589 residues: Delta-like protein 3 (589 aa).

The signal sequence occupies residues 1–32 (MVSLQVSSLPQTLILAFLLPQALPAGVFELQI). The Extracellular portion of the chain corresponds to 33–494 (HSFGPGPGPG…LRQADSQRFL (462 aa)). Positions 174 to 213 (ARCEPPAVGAACARLCRSRSAPSRCGPGLRPCTPFPDECE) constitute a DSL domain. 6 EGF-like domains span residues 218–251 (SLTV…PLCT), 276–312 (GPGP…PRCE), 314–353 (SGVT…SNCE), 355–391 (RVDR…PRCE), 393–429 (DLDD…RDCR), and 431–467 (RADP…VRCE). Cystine bridges form between C222–C233, C226–C239, C241–C250, C280–C291, C285–C300, C302–C311, C318–C329, C323–C341, C343–C352, C359–C370, C364–C379, C381–C390, C397–C408, C402–C417, C419–C428, C435–C446, C440–C455, and C457–C466. Residues 495-515 (LPPALGLLAAAALAGAALLLI) form a helical membrane-spanning segment. At 516–589 (HVRRRGPGRD…PAPSIYAREA (74 aa)) the chain is on the cytoplasmic side. Residues 552-574 (QDGAGDGPTSSADWNHPEDGDSR) form a disordered region.

Can bind and activate Notch-1 or another Notch receptor. In terms of processing, ubiquitinated by MIB (MIB1 or MIB2), leading to its endocytosis and subsequent degradation.

The protein localises to the membrane. Functionally, inhibits primary neurogenesis. May be required to divert neurons along a specific differentiation pathway. Plays a role in the formation of somite boundaries during segmentation of the paraxial mesoderm. In Rattus norvegicus (Rat), this protein is Delta-like protein 3 (Dll3).